A 375-amino-acid polypeptide reads, in one-letter code: MSNTIAYFDITIANEPAGRLTFELFDDVVPKTANNFKHLCIGDKTNEAGVKLAYAGSSFHRCIKGFMLQGGDFTRGDGTGGESIYGEKFEDENFELKHDKPMLLSMANAGPGTNGSQFFITTVPTPHLDGKHVVFGRVIYNRSLVRRIENIPTTSDRPDQAVTISSAGVLSPDEFAQLEAERQAKQAGSDGGDIWEDWPQDEEGVDAEKPEEALVVAGKLKEVGTKEFKAGNFAVALDKYQKALRYLDVHPVLPNDSPAELVESFRSLRLPLLTNAALCALKLPASPNTSSLVVSLTSRALTLPNLSASEKGKALYRRAQAYVLKKDDEAAEKDLKGALECVPGDAGVIKLLKDVEAKRKARREKERQAFAKMFG.

The PPIase cyclophilin-type domain occupies 7-169 (YFDITIANEP…QAVTISSAGV (163 aa)). TPR repeat units lie at residues 217–250 (AGKL…LDVH), 270–307 (LPLL…PNLS), and 312–345 (GKAL…VPGD).

It belongs to the cyclophilin-type PPIase family. PPIase D subfamily.

The protein resides in the cytoplasm. The catalysed reaction is [protein]-peptidylproline (omega=180) = [protein]-peptidylproline (omega=0). PPIases accelerate the folding of proteins. It catalyzes the cis-trans isomerization of proline imidic peptide bonds in oligopeptides. The sequence is that of Peptidyl-prolyl cis-trans isomerase D (CPR6) from Cryptococcus neoformans var. neoformans serotype D (strain JEC21 / ATCC MYA-565) (Filobasidiella neoformans).